The sequence spans 395 residues: Chaperone protein DnaJ (395 aa).

The 66-residue stretch at 4-69 folds into the J domain; it reads DYYEVLGVGR…DKRRRYDQFG (66 aa). The CR-type zinc finger occupies 152 to 233; it reads GVEKTLKIKK…CHGEGIKQGE (82 aa). Residues Cys165, Cys168, Cys181, Cys184, Cys207, Cys210, Cys221, and Cys224 each coordinate Zn(2+). CXXCXGXG motif repeat units follow at residues 165–172, 181–188, 207–214, and 221–228; these read CDVCNGTG, CPTCQGTG, CPTCGGEG, and CTACHGEG.

The protein belongs to the DnaJ family. As to quaternary structure, homodimer. The cofactor is Zn(2+).

Its subcellular location is the cytoplasm. Participates actively in the response to hyperosmotic and heat shock by preventing the aggregation of stress-denatured proteins and by disaggregating proteins, also in an autonomous, DnaK-independent fashion. Unfolded proteins bind initially to DnaJ; upon interaction with the DnaJ-bound protein, DnaK hydrolyzes its bound ATP, resulting in the formation of a stable complex. GrpE releases ADP from DnaK; ATP binding to DnaK triggers the release of the substrate protein, thus completing the reaction cycle. Several rounds of ATP-dependent interactions between DnaJ, DnaK and GrpE are required for fully efficient folding. Also involved, together with DnaK and GrpE, in the DNA replication of plasmids through activation of initiation proteins. The sequence is that of Chaperone protein DnaJ from Prosthecochloris aestuarii (strain DSM 271 / SK 413).